The chain runs to 450 residues: FAD-dependent monooxygenase okaB (450 aa).

A helical membrane pass occupies residues 14–34; the sequence is IVIIIVGLGIAGLSAAIECHG. Positions 43 and 116 each coordinate FAD. Arg194 is an active-site residue. FAD is bound by residues Asp318 and Gly331.

The protein belongs to the paxM FAD-dependent monooxygenase family.

It is found in the membrane. It carries out the reaction cyclo(N(8)-(alpha,alpha-dimethylallyl)-L-Trp-6a-(alpha,alpha-dimethylallyl)-L-Trp) + AH2 + O2 = okaramine C + A + H2O. It functions in the pathway alkaloid biosynthesis. Its function is as follows. FAD-dependent monooxygenase; part of the gene cluster that mediates the biosynthesis of okaramine B, a prenylated indole alkaloid that possesses an unusual octacyclic ring system, including a four-membered azetidine ring and an eight-membered azocine ring, and that exhibits insecticidal activity against silkworm larvae. Within the pathway, okaC performs indole 2,3-epoxidation, facilitating the formation of the hexahydropyrrolo[2,3-b]indole (HPI) moiety of okaramine C. okaC then performs asymmetric reverse prenylation of cyclo(L-Trp-L-Trp) at N-1 and C-2' of the indole ring to produce the cyclic prenylated tryptophan dimer cyclo(N8-(alpha,alpha-dimethylallyl)-L-Trp-6a-(alpha,alpha-dime-thylallyl)-L-Trp). The biosynthesis begins with the NRPS okaA that condenses two tryptophan molecules into cyclo(L-Trp-L-Trp). Prenylation by the prenyltransferase okaC then leads to the formation of cyclo(N8-(alpha,alpha-dimethylallyl)-L-Trp-6a-(alpha,alpha-dime-thylallyl)-L-Trp). This is followed by indole 2,3-epoxidation by the FAD-dependent monooxygenase okaB to facilitate the formation of the hexahydropyrrolo[2,3-b]indole (HPI) moiety of okaramine C. The cytochrome P450 monooxygenase okaD then likely catalyzes formation of the eight-membered ring of okaramine A. The dioxygenase okaE further forms the unusual 2-dimethyl-3-methyl-azetidine ring to yield 12-deshydroxyl okaramine E, as well as the hydroxylation of 12-deshydroxyl okaramine E to produce okaramine E. The cytochrome P450 monoxygenase okaG converts 12-deshydroxyl okaramine E into 3-desmethyl okaramine B which is further methylated by the methyltransferase okaF into okaramine B. In a shunt pathway, okaG and okaF together are also able to convert okaramine E into okaramine D. Okaramine H is produced by nonenzymatic conversion from okaramine A. The protein is FAD-dependent monooxygenase okaB of Penicillium ochrochloron.